We begin with the raw amino-acid sequence, 869 residues long: DNA mismatch repair protein MutS (869 aa).

Residue 624-631 coordinates ATP; the sequence is GPNMGGKS.

This sequence belongs to the DNA mismatch repair MutS family.

In terms of biological role, this protein is involved in the repair of mismatches in DNA. It is possible that it carries out the mismatch recognition step. This protein has a weak ATPase activity. The polypeptide is DNA mismatch repair protein MutS (Solibacter usitatus (strain Ellin6076)).